We begin with the raw amino-acid sequence, 632 residues long: Biosynthetic arginine decarboxylase (632 aa).

Lys-101 carries the post-translational modification N6-(pyridoxal phosphate)lysine. 281–291 (FDVGGGLGVDY) contributes to the substrate binding site.

Belongs to the Orn/Lys/Arg decarboxylase class-II family. SpeA subfamily. Mg(2+) serves as cofactor. Pyridoxal 5'-phosphate is required as a cofactor.

It carries out the reaction L-arginine + H(+) = agmatine + CO2. The protein operates within amine and polyamine biosynthesis; agmatine biosynthesis; agmatine from L-arginine: step 1/1. Catalyzes the biosynthesis of agmatine from arginine. This is Biosynthetic arginine decarboxylase from Klebsiella pneumoniae (strain 342).